Reading from the N-terminus, the 474-residue chain is 3-isopropylmalate dehydratase large subunit (474 aa).

Residues Cys-352, Cys-413, and Cys-416 each contribute to the [4Fe-4S] cluster site.

This sequence belongs to the aconitase/IPM isomerase family. LeuC type 1 subfamily. As to quaternary structure, heterodimer of LeuC and LeuD. The cofactor is [4Fe-4S] cluster.

It catalyses the reaction (2R,3S)-3-isopropylmalate = (2S)-2-isopropylmalate. The protein operates within amino-acid biosynthesis; L-leucine biosynthesis; L-leucine from 3-methyl-2-oxobutanoate: step 2/4. Catalyzes the isomerization between 2-isopropylmalate and 3-isopropylmalate, via the formation of 2-isopropylmaleate. The polypeptide is 3-isopropylmalate dehydratase large subunit (Pseudomonas savastanoi pv. phaseolicola (strain 1448A / Race 6) (Pseudomonas syringae pv. phaseolicola (strain 1448A / Race 6))).